The sequence spans 218 residues: 1-Cys peroxiredoxin PER1 (218 aa).

The Thioredoxin domain maps to 4 to 164 (LTIGDTVPNL…VVRAVDSLLT (161 aa)). Cys-46 acts as the Cysteine sulfenic acid (-SOH) intermediate in catalysis. A Bipartite nuclear localization signal motif is present at residues 194–217 (KKMFPQGFETADLPSKKGYLRFTK).

This sequence belongs to the peroxiredoxin family. Prx6 subfamily.

Its subcellular location is the nucleus. It localises to the cytoplasm. It carries out the reaction a hydroperoxide + [thioredoxin]-dithiol = an alcohol + [thioredoxin]-disulfide + H2O. In terms of biological role, thiol-specific peroxidase that catalyzes the reduction of hydrogen peroxide and organic hydroperoxides to water and alcohols, respectively. Seems to contribute to the inhibition of germination during stress. The protein is 1-Cys peroxiredoxin PER1 (PER1) of Triticum aestivum (Wheat).